The following is a 373-amino-acid chain: Alcohol dehydrogenase 2 (373 aa).

C47, T49, H69, C99, C102, C105, C113, and C177 together coordinate Zn(2+). Residues T49 and H69 each coordinate an alcohol. T49 contributes to the NAD(+) binding site. Residues 202–207, D226, K231, T272, F316, and R366 contribute to the NAD(+) site; that span reads GLGAVG.

This sequence belongs to the zinc-containing alcohol dehydrogenase family. Homodimer. Zn(2+) is required as a cofactor.

It is found in the cytoplasm. It carries out the reaction a primary alcohol + NAD(+) = an aldehyde + NADH + H(+). It catalyses the reaction a secondary alcohol + NAD(+) = a ketone + NADH + H(+). This chain is Alcohol dehydrogenase 2 (ADH2), found in Hordeum vulgare (Barley).